A 254-amino-acid chain; its full sequence is L-erythrulose-1-phosphate isomerase (254 aa).

His97 (electrophile) is an active-site residue. Catalysis depends on Glu170, which acts as the Proton acceptor. Positions 176 and 213 each coordinate substrate.

It belongs to the triosephosphate isomerase family. Homodimer.

Its subcellular location is the cytoplasm. The catalysed reaction is L-erythrulose 1-phosphate = D-erythrulose 4-phosphate. It participates in carbohydrate metabolism; erythritol degradation. Catalyzes the isomerization of D-erythrulose-4P to L-erythrulose-1P. In Mesorhizobium japonicum (strain LMG 29417 / CECT 9101 / MAFF 303099) (Mesorhizobium loti (strain MAFF 303099)), this protein is L-erythrulose-1-phosphate isomerase.